We begin with the raw amino-acid sequence, 417 residues long: D-amino acid dehydrogenase (417 aa).

An FAD-binding site is contributed by 3 to 17; sequence AVVLGSGVVGLMSAW.

The protein belongs to the DadA oxidoreductase family. FAD serves as cofactor.

It catalyses the reaction a D-alpha-amino acid + A + H2O = a 2-oxocarboxylate + AH2 + NH4(+). Its function is as follows. Oxidative deamination of D-amino acids. This is D-amino acid dehydrogenase from Vibrio vulnificus (strain YJ016).